The chain runs to 382 residues: U11/U12 small nuclear ribonucleoprotein 59 kDa protein (382 aa).

Positions 31–63 form a coiled coil; it reads NTKNITDQLKQLQDTLNLAKSMEKELEALKMIK. Positions 274–297 are disordered; sequence SEENTTLTTSNKTNNDTDKDSNTN. Over residues 277–287 the composition is skewed to low complexity; the sequence is NTTLTTSNKTN.

In terms of assembly, component of the U11/U12 snRNPs that are part of the U12-type spliceosome.

Its subcellular location is the nucleus. In Arabidopsis thaliana (Mouse-ear cress), this protein is U11/U12 small nuclear ribonucleoprotein 59 kDa protein (SNRNP59).